Reading from the N-terminus, the 261-residue chain is Rhomboid-type serine protease 2 (261 aa).

The next 5 membrane-spanning stretches (helical) occupy residues 17–37 (LTAGLSVFLTLVYVLNWVFPI), 58–78 (LYPLAHLSIFHLLLNLMSLFV), 94–114 (ITLNLLAIVTGVVYCLVGMLL), 116–136 (PNVYVGGASGWCFTLCGYFAV), and 155–175 (LYIPLVFLVLVTLLMPGSSFV). Serine 124 functions as the Nucleophile in the catalytic mechanism. Histidine 177 is an active-site residue.

It belongs to the peptidase S54 family.

It is found in the golgi apparatus membrane. The protein localises to the golgi apparatus. The protein resides in the cis-Golgi network membrane. The catalysed reaction is Cleaves type-1 transmembrane domains using a catalytic dyad composed of serine and histidine that are contributed by different transmembrane domains.. Its function is as follows. Probable rhomboid-type serine protease that catalyzes intramembrane proteolysis. This Eremothecium gossypii (strain ATCC 10895 / CBS 109.51 / FGSC 9923 / NRRL Y-1056) (Yeast) protein is Rhomboid-type serine protease 2 (RBD2).